Consider the following 356-residue polypeptide: Homoserine O-acetyltransferase (356 aa).

The region spanning 50 to 335 (NVILVCHALT…DEPYGHDAFL (286 aa)) is the AB hydrolase-1 domain. The active-site Nucleophile is the Ser-146. Arg-215 contacts substrate. Active-site residues include Asp-302 and His-331. Asp-332 contributes to the substrate binding site.

Belongs to the AB hydrolase superfamily. MetX family. Homodimer.

The protein resides in the cytoplasm. It carries out the reaction L-homoserine + acetyl-CoA = O-acetyl-L-homoserine + CoA. It functions in the pathway amino-acid biosynthesis; L-methionine biosynthesis via de novo pathway; O-acetyl-L-homoserine from L-homoserine: step 1/1. In terms of biological role, transfers an acetyl group from acetyl-CoA to L-homoserine, forming acetyl-L-homoserine. In Chlorobaculum parvum (strain DSM 263 / NCIMB 8327) (Chlorobium vibrioforme subsp. thiosulfatophilum), this protein is Homoserine O-acetyltransferase.